Consider the following 221-residue polypeptide: PKHD-type hydroxylase PMT_0286 (221 aa).

The 95-residue stretch at 80–174 (HIHGVMFSRS…RLVCVGWIQS (95 aa)) folds into the Fe2OG dioxygenase domain. Fe cation is bound by residues histidine 98, aspartate 100, and histidine 155. 2-oxoglutarate is bound at residue arginine 165.

Fe(2+) serves as cofactor. L-ascorbate is required as a cofactor.

This Prochlorococcus marinus (strain MIT 9313) protein is PKHD-type hydroxylase PMT_0286.